A 67-amino-acid polypeptide reads, in one-letter code: Cold shock protein ScoF (67 aa).

The CSD domain occupies 4–64 (GTVKWFNSEK…GQKGPQAENI (61 aa)).

Its subcellular location is the cytoplasm. This is Cold shock protein ScoF (scoF) from Streptomyces coelicolor (strain ATCC BAA-471 / A3(2) / M145).